Reading from the N-terminus, the 340-residue chain is Selenide, water dikinase (340 aa).

The active site involves selenocysteine 17. Position 17 (selenocysteine 17) is a non-standard amino acid, selenocysteine. Residues lysine 20 and 45–47 (NNE) each bind ATP. Aspartate 48 is a binding site for Mg(2+). ATP is bound by residues aspartate 65, aspartate 88, and 136-138 (GHT). Mg(2+) is bound at residue aspartate 88. A Mg(2+)-binding site is contributed by aspartate 224.

The protein belongs to the selenophosphate synthase 1 family. Class I subfamily. Homodimer. Mg(2+) serves as cofactor.

The enzyme catalyses hydrogenselenide + ATP + H2O = selenophosphate + AMP + phosphate + 2 H(+). Its function is as follows. Synthesizes selenophosphate from selenide and ATP. This is Selenide, water dikinase from Campylobacter jejuni (strain RM1221).